The chain runs to 342 residues: N-acetyl-gamma-glutamyl-phosphate reductase (342 aa).

Cys-147 is an active-site residue.

The protein belongs to the NAGSA dehydrogenase family. Type 1 subfamily.

The protein localises to the cytoplasm. The catalysed reaction is N-acetyl-L-glutamate 5-semialdehyde + phosphate + NADP(+) = N-acetyl-L-glutamyl 5-phosphate + NADPH + H(+). The protein operates within amino-acid biosynthesis; L-arginine biosynthesis; N(2)-acetyl-L-ornithine from L-glutamate: step 3/4. In terms of biological role, catalyzes the NADPH-dependent reduction of N-acetyl-5-glutamyl phosphate to yield N-acetyl-L-glutamate 5-semialdehyde. This is N-acetyl-gamma-glutamyl-phosphate reductase from Methanosphaera stadtmanae (strain ATCC 43021 / DSM 3091 / JCM 11832 / MCB-3).